The chain runs to 478 residues: tRNA(Ile)-lysidine synthase (478 aa).

27 to 32 (SGGSDS) contacts ATP.

It belongs to the tRNA(Ile)-lysidine synthase family.

The protein localises to the cytoplasm. The enzyme catalyses cytidine(34) in tRNA(Ile2) + L-lysine + ATP = lysidine(34) in tRNA(Ile2) + AMP + diphosphate + H(+). In terms of biological role, ligates lysine onto the cytidine present at position 34 of the AUA codon-specific tRNA(Ile) that contains the anticodon CAU, in an ATP-dependent manner. Cytidine is converted to lysidine, thus changing the amino acid specificity of the tRNA from methionine to isoleucine. This Rickettsia rickettsii (strain Iowa) protein is tRNA(Ile)-lysidine synthase.